The sequence spans 302 residues: 4-diphosphocytidyl-2-C-methyl-D-erythritol kinase (302 aa).

Residue Lys32 is part of the active site. An ATP-binding site is contributed by 115–125; the sequence is PMGGGVGGGSS. Residue Asp157 is part of the active site.

This sequence belongs to the GHMP kinase family. IspE subfamily.

It carries out the reaction 4-CDP-2-C-methyl-D-erythritol + ATP = 4-CDP-2-C-methyl-D-erythritol 2-phosphate + ADP + H(+). Its pathway is isoprenoid biosynthesis; isopentenyl diphosphate biosynthesis via DXP pathway; isopentenyl diphosphate from 1-deoxy-D-xylulose 5-phosphate: step 3/6. Its function is as follows. Catalyzes the phosphorylation of the position 2 hydroxy group of 4-diphosphocytidyl-2C-methyl-D-erythritol. The polypeptide is 4-diphosphocytidyl-2-C-methyl-D-erythritol kinase (Actinobacillus succinogenes (strain ATCC 55618 / DSM 22257 / CCUG 43843 / 130Z)).